A 349-amino-acid chain; its full sequence is MKLHHCLSFLLVVTLVPAALSLEDVAPLGANQSSYNASFLPSFELSAGSYSGDDVIIVKEGTNVSLECLLTVDQYGEVHWYNSKGQQLHSRGGKWLVSDNFLNITSVAFDDRGLYTCIITSPARASYSVTLRVIFTSGDMSVYYMVVCLIAFTITLILNVTRLCLMSTHLRKTEKAINEFFRTEGAEKLQKAFEIAKRIPIITSAKTLELAKVTQFKTMEFARYIEELARSVPLPPLILNCRAFVEEMFEAVRVDDPDDMGERIKERPALDAQSGIYVINPELGRSNSPGGDSDDGSLSEQGQEIAVQVSVHLQSETKSIGTDSQDSSHFSPPSDPASAEGSIHHRVSI.

Positions 1–21 (MKLHHCLSFLLVVTLVPAALS) are cleaved as a signal peptide. Residues 22–139 (LEDVAPLGAN…TLRVIFTSGD (118 aa)) lie on the Extracellular side of the membrane. N-linked (GlcNAc...) asparagine glycans are attached at residues Asn-31, Asn-36, Asn-63, and Asn-103. One can recognise an Ig-like C2-type domain in the interval 41-130 (PSFELSAGSY…SPARASYSVT (90 aa)). A disulfide bond links Cys-68 and Cys-117. The chain crosses the membrane as a helical span at residues 140 to 160 (MSVYYMVVCLIAFTITLILNV). Residues 161 to 349 (TRLCLMSTHL…EGSIHHRVSI (189 aa)) are Cytoplasmic-facing. Residues 280–349 (NPELGRSNSP…EGSIHHRVSI (70 aa)) are disordered. A compositionally biased stretch (polar residues) spans 311-331 (VHLQSETKSIGTDSQDSSHFS).

Post-translationally, glycosylated.

The protein localises to the cell membrane. Functionally, component of the elastin-associated microfibrils. This is Microfibril-associated glycoprotein 3 (Mfap3) from Mus musculus (Mouse).